The following is a 262-amino-acid chain: Octopine permease ATP-binding protein P (262 aa).

One can recognise an ABC transporter domain in the interval 9 to 254 (VQLKDIRKNF…PRTDRFRQFL (246 aa)). 41–48 (GSSGSGKS) is a binding site for ATP.

Belongs to the ABC transporter superfamily.

Its subcellular location is the cell inner membrane. Functionally, component of the octopine active transport system probably consisting of four subunits: Q, M, P and T. In Rhizobium radiobacter (Agrobacterium tumefaciens), this protein is Octopine permease ATP-binding protein P (occP).